The sequence spans 459 residues: Putative flavin-containing monooxygenase 2 (459 aa).

Residues 17 to 21 (GAGVS), E38, and 46 to 47 (VW) contribute to the FAD site. 217–220 (SAID) is a binding site for NADP(+).

The protein belongs to the FMO family. Requires FAD as cofactor.

The chain is Putative flavin-containing monooxygenase 2 (FMO2) from Arabidopsis thaliana (Mouse-ear cress).